The following is a 101-amino-acid chain: Transcription factor ILI2 (101 aa).

The disordered stretch occupies residues 1–22 (MSSSRRSRTSSRLAAAPPPTDE). The region spanning 8–63 (RTSSRLAAAPPPTDEQMAELISKLQAVLPTRGGEANAKQASSAEVLQEACRYIRRL) is the bHLH domain.

The protein belongs to the bHLH protein family.

Its function is as follows. Atypical and probable non DNA-binding bHLH transcription factor that integrates multiple signaling pathways to regulate cell elongation and plant development. The polypeptide is Transcription factor ILI2 (ILI2) (Oryza sativa subsp. indica (Rice)).